We begin with the raw amino-acid sequence, 59 residues long: Conorfamide-Ep1 (59 aa).

Positions 1–19 (MSGCGFLLLALLLLVTVEA) are cleaved as a signal peptide. Positions 20 to 25 (TKMEKK) are excised as a propeptide. Isoleucine 43 bears the Isoleucine amide mark. Residues 45-59 (RRDMQSPLLSERLRF) constitute a propeptide that is removed on maturation.

This sequence belongs to the FARP (FMRFamide related peptide) family. Expressed by the venom duct.

The protein resides in the secreted. Neurotoxin that is active on vertebrates. When tested at high doses (10 uM), the toxin affects all zebrafish and mouse DRG neurons in culture, which could be an indication of an effect on a widely expressed receptor or ion channel found in both species. At low doses (1 uM), the effects of the toxin are confined to a specific subpopulation of zebrafish and mouse DRG neurons. In vivo, it induces long-lasting dramatic alterations in the locomotor behavior of zebrafish larvae. It rapidly induces hypoactivity and death of larvae at high doses and it causes hyperactivity at lower doses. In zebrafish adults, intramuscular injection causes the decrease of the movements and visited spaces. In mice, intracranial injection causes lethargy and prolonges sleeping phases and reduced movement. The sequence is that of Conorfamide-Ep1 from Conus episcopatus (Bishop's cone).